A 130-amino-acid polypeptide reads, in one-letter code: Small ribosomal subunit protein uS8 (130 aa).

Belongs to the universal ribosomal protein uS8 family. As to quaternary structure, part of the 30S ribosomal subunit.

Its function is as follows. One of the primary rRNA binding proteins, it binds directly to 16S rRNA central domain where it helps coordinate assembly of the platform of the 30S subunit. The protein is Small ribosomal subunit protein uS8 of Pyrococcus horikoshii (strain ATCC 700860 / DSM 12428 / JCM 9974 / NBRC 100139 / OT-3).